The following is a 255-amino-acid chain: Triosephosphate isomerase (255 aa).

Asn-9–Lys-11 contacts substrate. His-95 functions as the Electrophile in the catalytic mechanism. The Proton acceptor role is filled by Glu-167. Substrate-binding positions include Gly-173, Ser-212, and Gly-233–Gly-234.

Belongs to the triosephosphate isomerase family. In terms of assembly, homodimer.

Its subcellular location is the cytoplasm. It catalyses the reaction D-glyceraldehyde 3-phosphate = dihydroxyacetone phosphate. The protein operates within carbohydrate biosynthesis; gluconeogenesis. It functions in the pathway carbohydrate degradation; glycolysis; D-glyceraldehyde 3-phosphate from glycerone phosphate: step 1/1. In terms of biological role, involved in the gluconeogenesis. Catalyzes stereospecifically the conversion of dihydroxyacetone phosphate (DHAP) to D-glyceraldehyde-3-phosphate (G3P). This is Triosephosphate isomerase from Pectobacterium atrosepticum (strain SCRI 1043 / ATCC BAA-672) (Erwinia carotovora subsp. atroseptica).